The chain runs to 449 residues: Wilms tumor protein (449 aa).

Residues 48–84 are disordered; it reads YGSLGGPAPPPAPPPPPPPPPHSFIKQEPSWGGAEPH. Positions 54–69 are enriched in pro residues; it reads PAPPPAPPPPPPPPPH. Glycyl lysine isopeptide (Lys-Gly) (interchain with G-Cter in SUMO) cross-links involve residues K73 and K177. The short motif at 236–244 is the 9aaTAD element; sequence MTWNQMNLG. 3 consecutive C2H2-type zinc fingers follow at residues 323-347, 353-377, and 383-405; these read FMCA…SRKH, YQCD…QRRH, and FQCK…TRTH. Important for interaction with target DNA regions lie at residues 367 to 381 and 393 to 401; these read SDQL…TGVK and SRSDHLKTH. Residues 408 to 410 carry the KTS motif motif; the sequence is KTS. The segment at 414 to 438 adopts a C2H2-type 4 zinc-finger fold; it reads FSCRWPSCQKKFARSDELVRHHNMH. A Glycyl lysine isopeptide (Lys-Gly) (interchain with G-Cter in SUMO2) cross-link involves residue K444.

The protein belongs to the EGR C2H2-type zinc-finger protein family. In terms of assembly, homodimer. Interacts with WTIP. Interacts with actively translating polysomes. Detected in nuclear ribonucleoprotein (mRNP) particles. Interacts with HNRNPU via the zinc-finger region. Interacts with U2AF2. Interacts with CITED2. Interacts with ZNF224 via the zinc-finger region. Interacts with WTAP and SRY. Interacts with AMER1. Interacts with RBM4. As to expression, expressed in the kidney and a subset of hematopoietic cells.

It is found in the nucleus. The protein resides in the nucleolus. It localises to the cytoplasm. Its subcellular location is the nucleus speckle. The protein localises to the nucleoplasm. Its function is as follows. Transcription factor that plays an important role in cellular development and cell survival. Recognizes and binds to the DNA sequence 5'-GCG(T/G)GGGCG-3'. Regulates the expression of numerous target genes, including EPO. Plays an essential role for development of the urogenital system. It has a tumor suppressor as well as an oncogenic role in tumor formation. Function may be isoform-specific: isoforms lacking the KTS motif may act as transcription factors. Isoforms containing the KTS motif may bind mRNA and play a role in mRNA metabolism or splicing. Isoform 1 has lower affinity for DNA, and can bind RNA. In Homo sapiens (Human), this protein is Wilms tumor protein (WT1).